Consider the following 360-residue polypeptide: Biotin synthase (360 aa).

The interval 1 to 25 is disordered; the sequence is MQHAPLNFVPDAAKVPPTPGQSPNA. Residues 58–285 enclose the Radical SAM core domain; sequence NAVQLSTLLS…KAMVRLSAGR (228 aa). Cys73, Cys77, and Cys80 together coordinate [4Fe-4S] cluster. [2Fe-2S] cluster contacts are provided by Cys117, Cys148, Cys208, and Arg280. Positions 340–360 are disordered; the sequence is QAEGAQHSHSSHCHIDITPAD.

Belongs to the radical SAM superfamily. Biotin synthase family. Homodimer. Requires [4Fe-4S] cluster as cofactor. [2Fe-2S] cluster is required as a cofactor.

The catalysed reaction is (4R,5S)-dethiobiotin + (sulfur carrier)-SH + 2 reduced [2Fe-2S]-[ferredoxin] + 2 S-adenosyl-L-methionine = (sulfur carrier)-H + biotin + 2 5'-deoxyadenosine + 2 L-methionine + 2 oxidized [2Fe-2S]-[ferredoxin]. It participates in cofactor biosynthesis; biotin biosynthesis; biotin from 7,8-diaminononanoate: step 2/2. Catalyzes the conversion of dethiobiotin (DTB) to biotin by the insertion of a sulfur atom into dethiobiotin via a radical-based mechanism. This Ralstonia nicotianae (strain ATCC BAA-1114 / GMI1000) (Ralstonia solanacearum) protein is Biotin synthase.